Consider the following 305-residue polypeptide: Tyrosine recombinase XerC (305 aa).

The Core-binding (CB) domain occupies 4–95; the sequence is TSIQELIDKW…AVKNFYRFLE (92 aa). Residues 116 to 298 form the Tyr recombinase domain; that stretch reads LLPKALSEDD…SIKHLEAVYT (183 aa). Catalysis depends on residues Arg159, Lys182, His250, Arg253, and His276. Tyr285 functions as the O-(3'-phospho-DNA)-tyrosine intermediate in the catalytic mechanism.

This sequence belongs to the 'phage' integrase family. XerC subfamily. As to quaternary structure, forms a cyclic heterotetrameric complex composed of two molecules of XerC and two molecules of XerD.

The protein localises to the cytoplasm. Functionally, site-specific tyrosine recombinase, which acts by catalyzing the cutting and rejoining of the recombining DNA molecules. The XerC-XerD complex is essential to convert dimers of the bacterial chromosome into monomers to permit their segregation at cell division. It also contributes to the segregational stability of plasmids. This chain is Tyrosine recombinase XerC, found in Rickettsia felis (strain ATCC VR-1525 / URRWXCal2) (Rickettsia azadi).